A 405-amino-acid chain; its full sequence is Deoxyguanosinetriphosphate triphosphohydrolase-like protein (405 aa).

The HD domain occupies 75 to 219; it reads RLTHTIEVAQ…AAIADDIAYN (145 aa).

It belongs to the dGTPase family. Type 2 subfamily.

This chain is Deoxyguanosinetriphosphate triphosphohydrolase-like protein, found in Sinorhizobium medicae (strain WSM419) (Ensifer medicae).